The following is a 239-amino-acid chain: MEIFPAIDLKEGRCVRLYQGEFSKETVMNEDPVAQAIIFEKFGAKRLHIVDLDGAVAGESLNLSVIERICKAVRIPVQVGGGIRSLVAVEKLFSVGVDKVILGTAALYDKTFLEEAVLLYKEKIIVGIDAKNGFVATRGWLDVSEISYIDLAKQMENIGVQTIVFTDISKDGTLAGPNIGQLELLQKSVAIRLIASGGVASIQDVKKLNDMNIYGVIIGKALYEKTIDLEEVLEVTKLC.

Asp-8 acts as the Proton acceptor in catalysis. The active-site Proton donor is the Asp-129.

The protein belongs to the HisA/HisF family.

The protein resides in the cytoplasm. It carries out the reaction 1-(5-phospho-beta-D-ribosyl)-5-[(5-phospho-beta-D-ribosylamino)methylideneamino]imidazole-4-carboxamide = 5-[(5-phospho-1-deoxy-D-ribulos-1-ylimino)methylamino]-1-(5-phospho-beta-D-ribosyl)imidazole-4-carboxamide. It participates in amino-acid biosynthesis; L-histidine biosynthesis; L-histidine from 5-phospho-alpha-D-ribose 1-diphosphate: step 4/9. This Bacillus thuringiensis (strain Al Hakam) protein is 1-(5-phosphoribosyl)-5-[(5-phosphoribosylamino)methylideneamino] imidazole-4-carboxamide isomerase.